A 324-amino-acid polypeptide reads, in one-letter code: Beta-ketoacyl-[acyl-carrier-protein] synthase III (324 aa).

Catalysis depends on residues Cys116 and His251. Residues Gln252–Arg256 form an ACP-binding region. The active site involves Asn281.

The protein belongs to the thiolase-like superfamily. FabH family. In terms of assembly, homodimer.

The protein localises to the cytoplasm. The enzyme catalyses malonyl-[ACP] + acetyl-CoA + H(+) = 3-oxobutanoyl-[ACP] + CO2 + CoA. It functions in the pathway lipid metabolism; fatty acid biosynthesis. Functionally, catalyzes the condensation reaction of fatty acid synthesis by the addition to an acyl acceptor of two carbons from malonyl-ACP. Catalyzes the first condensation reaction which initiates fatty acid synthesis and may therefore play a role in governing the total rate of fatty acid production. Possesses both acetoacetyl-ACP synthase and acetyl transacylase activities. Its substrate specificity determines the biosynthesis of branched-chain and/or straight-chain of fatty acids. The chain is Beta-ketoacyl-[acyl-carrier-protein] synthase III from Xylella fastidiosa (strain 9a5c).